The following is an 88-amino-acid chain: Gas vesicle protein A2 (88 aa).

The protein belongs to the gas vesicle GvpA family. As to quaternary structure, the gas vesicle shell is 2 nm thick and consists of a single layer of this protein. It forms helical ribs nearly perpendicular to the long axis of the vesicle.

It is found in the gas vesicle shell. Gas vesicles are hollow, gas filled proteinaceous nanostructures found in some microorganisms. During planktonic growth they allow positioning of the organism at a favorable depth for light or nutrient acquisition. GvpA forms the protein shell. In terms of biological role, it is not clear if the 2 type A proteins in this organism are functionally redundant. Functionally, when a minimal gvp locus (gvpA2-gvpR-gvpN-gvpF-gvpG-gvpL-gvpS-gvpK-gvpJ-gvpT-gvpU, called pNL29) is expressed in E.coli gas vesicles are made. This chain is Gas vesicle protein A2, found in Priestia megaterium (Bacillus megaterium).